Reading from the N-terminus, the 230-residue chain is Ribonuclease 3 (230 aa).

Positions 10 to 133 constitute an RNase III domain; it reads DPRLLSRIGY…IIGAIYLDSG (124 aa). Glu-46 serves as a coordination point for Mg(2+). The active site involves Asp-50. Mg(2+) is bound by residues Asp-119 and Glu-122. Glu-122 is a catalytic residue. The DRBM domain maps to 161–230; that stretch reads DPKSRLQEYL…AAEILKLLEQ (70 aa).

The protein belongs to the ribonuclease III family. In terms of assembly, homodimer. Mg(2+) is required as a cofactor.

It is found in the cytoplasm. It carries out the reaction Endonucleolytic cleavage to 5'-phosphomonoester.. Functionally, digests double-stranded RNA. Involved in the processing of primary rRNA transcript to yield the immediate precursors to the large and small rRNAs (23S and 16S). Processes some mRNAs, and tRNAs when they are encoded in the rRNA operon. Processes pre-crRNA and tracrRNA of type II CRISPR loci if present in the organism. This chain is Ribonuclease 3 (rnc), found in Acinetobacter pittii (strain PHEA-2).